A 443-amino-acid polypeptide reads, in one-letter code: Thymidine phosphorylase (443 aa).

It belongs to the thymidine/pyrimidine-nucleoside phosphorylase family. In terms of assembly, homodimer.

It carries out the reaction thymidine + phosphate = 2-deoxy-alpha-D-ribose 1-phosphate + thymine. It functions in the pathway pyrimidine metabolism; dTMP biosynthesis via salvage pathway; dTMP from thymine: step 1/2. The enzymes which catalyze the reversible phosphorolysis of pyrimidine nucleosides are involved in the degradation of these compounds and in their utilization as carbon and energy sources, or in the rescue of pyrimidine bases for nucleotide synthesis. This Shewanella baltica (strain OS195) protein is Thymidine phosphorylase.